Reading from the N-terminus, the 207-residue chain is Large ribosomal subunit protein bL25 (207 aa).

The disordered stretch occupies residues 185-207 (DLEEETGEAAAEAEAPAEEGAES).

The protein belongs to the bacterial ribosomal protein bL25 family. CTC subfamily. Part of the 50S ribosomal subunit; part of the 5S rRNA/L5/L18/L25 subcomplex. Contacts the 5S rRNA. Binds to the 5S rRNA independently of L5 and L18.

This is one of the proteins that binds to the 5S RNA in the ribosome where it forms part of the central protuberance. This Rhodococcus jostii (strain RHA1) protein is Large ribosomal subunit protein bL25.